The following is a 246-amino-acid chain: Serine protease 1 (246 aa).

A signal peptide spans 1 to 15 (MSALLILALVGAAVA). The propeptide at 16 to 23 (FPLEDDDK) is activation peptide. A Peptidase S1 domain is found at 24–244 (IVGGYTCPEH…FVGWIQDTIA (221 aa)). Intrachain disulfides connect Cys-30/Cys-160, Cys-48/Cys-64, Cys-132/Cys-233, Cys-139/Cys-206, Cys-171/Cys-185, and Cys-196/Cys-220. His-63 functions as the Charge relay system in the catalytic mechanism. Residues Glu-75, Asn-77, Val-80, and Glu-85 each contribute to the Ca(2+) site. Asp-107 serves as the catalytic Charge relay system. The Charge relay system role is filled by Ser-200.

It belongs to the peptidase S1 family. In terms of assembly, interacts with SERPINA1. Ca(2+) is required as a cofactor.

The protein resides in the secreted. It localises to the extracellular space. The catalysed reaction is Preferential cleavage: Arg-|-Xaa, Lys-|-Xaa.. The protein is Serine protease 1 of Rattus norvegicus (Rat).